We begin with the raw amino-acid sequence, 406 residues long: Digeranylgeranylglycerophospholipid reductase 2 (406 aa).

Gly-15, Glu-34, Cys-45, Ala-46, Gly-48, Arg-99, Ala-123, Asp-279, Gly-291, and Ile-292 together coordinate FAD.

It belongs to the geranylgeranyl reductase family. DGGGPL reductase subfamily. The cofactor is FAD.

The enzyme catalyses a 2,3-bis-O-phytanyl-sn-glycerol 1-phospholipid + 8 oxidized 2[4Fe-4S]-[ferredoxin] = a 2,3-bis-O-(geranylgeranyl)-sn-glycerol 1-phospholipid + 8 reduced 2[4Fe-4S]-[ferredoxin] + 16 H(+). It catalyses the reaction 2,3-bis-O-(phytanyl)-sn-glycerol 1-phosphate + 8 oxidized 2[4Fe-4S]-[ferredoxin] = 2,3-bis-O-(geranylgeranyl)-sn-glycerol 1-phosphate + 8 reduced 2[4Fe-4S]-[ferredoxin] + 16 H(+). It carries out the reaction a 2,3-bis-O-phytanyl-sn-glycerol 1-phospholipid + 8 A = a 2,3-bis-O-(geranylgeranyl)-sn-glycerol 1-phospholipid + 8 AH2. The catalysed reaction is CDP-2,3-bis-O-(geranylgeranyl)-sn-glycerol + 8 AH2 = CDP-2,3-bis-O-(phytanyl)-sn-glycerol + 8 A. The enzyme catalyses archaetidylserine + 8 AH2 = 2,3-bis-O-phytanyl-sn-glycero-3-phospho-L-serine + 8 A. Its pathway is membrane lipid metabolism; glycerophospholipid metabolism. Is involved in the reduction of 2,3-digeranylgeranylglycerophospholipids (unsaturated archaeols) into 2,3-diphytanylglycerophospholipids (saturated archaeols) in the biosynthesis of archaeal membrane lipids. Catalyzes the formation of archaetidic acid (2,3-di-O-phytanyl-sn-glyceryl phosphate) from 2,3-di-O-geranylgeranylglyceryl phosphate (DGGGP) via the hydrogenation of each double bond of the isoprenoid chains. Is also probably able to reduce double bonds of geranyl groups in CDP-2,3-bis-O-(geranylgeranyl)-sn-glycerol and archaetidylserine, thus acting at various stages in the biosynthesis of archaeal membrane lipids. The protein is Digeranylgeranylglycerophospholipid reductase 2 of Methanococcoides burtonii (strain DSM 6242 / NBRC 107633 / OCM 468 / ACE-M).